The chain runs to 130 residues: Trypsin inhibitor (130 aa).

The disordered stretch occupies residues 27 to 49 (LHKQARQSGSGPSPQGPQQRPPL). Over residues 32 to 49 (RQSGSGPSPQGPQQRPPL) the composition is skewed to low complexity.

This sequence belongs to the 2S seed storage albumins family. As to quaternary structure, the protein consists of two chains linked by disulfide bonds.

Functionally, inhibits trypsin with a Ki of 7 x 10(-6) M. The chain is Trypsin inhibitor from Mutarda arvensis (Charlock mustard).